Consider the following 364-residue polypeptide: Alanine racemase (364 aa).

Lys34 acts as the Proton acceptor; specific for D-alanine in catalysis. Lys34 is modified (N6-(pyridoxal phosphate)lysine). Arg129 is a binding site for substrate. The Proton acceptor; specific for L-alanine role is filled by Tyr259. Met307 is a substrate binding site.

It belongs to the alanine racemase family. Pyridoxal 5'-phosphate is required as a cofactor.

The catalysed reaction is L-alanine = D-alanine. The protein operates within amino-acid biosynthesis; D-alanine biosynthesis; D-alanine from L-alanine: step 1/1. Functionally, catalyzes the interconversion of L-alanine and D-alanine. May also act on other amino acids. This chain is Alanine racemase (alr), found in Coxiella burnetii (strain RSA 331 / Henzerling II).